Consider the following 1048-residue polypeptide: Selenate reductase subunit A (1048 aa).

A signal peptide (tat-type signal) is located at residues 1–39; that stretch reads MENQHQKFISRRNFIKTSALLGGTAFLGTGLPNIKKTYS. The 4Fe-4S Mo/W bis-MGD-type domain maps to 56–129; it reads ENILYSACLQ…AGIQHAYDPY (74 aa). [4Fe-4S] cluster is bound by residues Cys63, Cys66, Cys70, and Cys115. Residue Cys270 participates in Mo-bis(molybdopterin guanine dinucleotide) binding.

The protein belongs to the prokaryotic molybdopterin-containing oxidoreductase family. As to quaternary structure, the complex is composed of three subunits: SrdA, SrdB and SrdC. [4Fe-4S] cluster serves as cofactor. The cofactor is Mo-bis(molybdopterin guanine dinucleotide). Post-translationally, predicted to be exported by the Tat system. The position of the signal peptide cleavage has not been experimentally proven.

It is found in the secreted. It carries out the reaction selenite + a quinone + H2O = selenate + a quinol. Its function is as follows. Component of the respiratory selenate reductase complex, which catalyzes the reduction of selenate to selenite. SrdA is probably the catalytic subunit that reduces selenate. The protein is Selenate reductase subunit A of Mesobacillus selenatarsenatis (strain DSM 18680 / JCM 14380 / FERM P-15431 / SF-1).